A 181-amino-acid polypeptide reads, in one-letter code: Early E3 20.3 kDa glycoprotein (181 aa).

Asn-29, Asn-57, Asn-70, and Asn-75 each carry an N-linked (GlcNAc...) asparagine; by host glycan.

Belongs to the adenoviridae E3_20 family.

Functionally, E3 proteins seem to be dispensable for virus growth in tissue culture cells. They are potentially important for virus growth under special conditions; E3 region may help adenoviruses to evade the immune surveillance of the host. In Human adenovirus B serotype 11 (strain Slobiski) (HAdV-11), this protein is Early E3 20.3 kDa glycoprotein.